The chain runs to 251 residues: Hydroxyacylglutathione hydrolase (251 aa).

Residues H53, H55, D57, H58, H110, D127, and H165 each coordinate Zn(2+).

It belongs to the metallo-beta-lactamase superfamily. Glyoxalase II family. In terms of assembly, monomer. Zn(2+) is required as a cofactor.

The catalysed reaction is an S-(2-hydroxyacyl)glutathione + H2O = a 2-hydroxy carboxylate + glutathione + H(+). The protein operates within secondary metabolite metabolism; methylglyoxal degradation; (R)-lactate from methylglyoxal: step 2/2. Its function is as follows. Thiolesterase that catalyzes the hydrolysis of S-D-lactoyl-glutathione to form glutathione and D-lactic acid. This is Hydroxyacylglutathione hydrolase from Escherichia coli O6:K15:H31 (strain 536 / UPEC).